Consider the following 446-residue polypeptide: RUN domain-containing protein 3A (446 aa).

The tract at residues 1 to 298 (MEASFVQTTM…LQLQLEEAAA (298 aa)) is interaction with RAP2A. In terms of domain architecture, RUN spans 52–189 (DDSSEEFVNF…IDFSFCLKGE (138 aa)). Position 215 is a phosphothreonine (Thr215). The disordered stretch occupies residues 216-239 (DEEERHSAESSTSEDNSPEHPYLP). Residue Ser232 is modified to Phosphoserine. Residues 267–322 (YLEELVRLRESQLKDLEAENRRLQLQLEEAAAQNQREKRELEGVILELQEQLTGLI) are a coiled coil. Polar residues predominate over residues 372–384 (PLSAEASLSSDSQ). The tract at residues 372 to 403 (PLSAEASLSSDSQRLGEAKRDEEPWGPIGKDP) is disordered. Residues 385–394 (RLGEAKRDEE) are compositionally biased toward basic and acidic residues. Phosphoserine occurs at positions 416 and 419.

This sequence belongs to the RUNDC3 family. In terms of assembly, interacts with the GTP-bound form of RAP2A. As to expression, brain.

In terms of biological role, may act as an effector of RAP2A in neuronal cells. This chain is RUN domain-containing protein 3A (Rundc3a), found in Mus musculus (Mouse).